We begin with the raw amino-acid sequence, 126 residues long: Large ribosomal subunit protein bL12 (126 aa).

The protein belongs to the bacterial ribosomal protein bL12 family. In terms of assembly, homodimer. Part of the ribosomal stalk of the 50S ribosomal subunit. Forms a multimeric L10(L12)X complex, where L10 forms an elongated spine to which 2 to 4 L12 dimers bind in a sequential fashion. Binds GTP-bound translation factors.

Forms part of the ribosomal stalk which helps the ribosome interact with GTP-bound translation factors. Is thus essential for accurate translation. This Streptococcus pyogenes serotype M28 (strain MGAS6180) protein is Large ribosomal subunit protein bL12.